Here is a 91-residue protein sequence, read N- to C-terminus: MEKDLESHVDDVMSEHGVVGVMCTDDQGLSLIAKGTANPATAGFVQNLAESARKLYPDSEQQPVICLESDACNLLIKSQNKVTIAVHKVPS.

This sequence belongs to the LAMTOR5 family. In terms of assembly, part of the Ragulator complex.

The protein localises to the cytoplasm. Its subcellular location is the lysosome. In terms of biological role, regulator of the TOR pathway, a signaling cascade that promotes cell growth in response to growth factors, energy levels, and amino acids. As part of the Ragulator complex, may activate the TOR signaling cascade in response to amino acids. This Nematostella vectensis (Starlet sea anemone) protein is Ragulator complex protein LAMTOR5 homolog.